Here is a 453-residue protein sequence, read N- to C-terminus: UDP-N-acetylmuramoylalanine--D-glutamate ligase (453 aa).

120–126 (GSNGKST) contacts ATP.

This sequence belongs to the MurCDEF family.

The protein localises to the cytoplasm. The enzyme catalyses UDP-N-acetyl-alpha-D-muramoyl-L-alanine + D-glutamate + ATP = UDP-N-acetyl-alpha-D-muramoyl-L-alanyl-D-glutamate + ADP + phosphate + H(+). It participates in cell wall biogenesis; peptidoglycan biosynthesis. Functionally, cell wall formation. Catalyzes the addition of glutamate to the nucleotide precursor UDP-N-acetylmuramoyl-L-alanine (UMA). This chain is UDP-N-acetylmuramoylalanine--D-glutamate ligase, found in Nitrosococcus oceani (strain ATCC 19707 / BCRC 17464 / JCM 30415 / NCIMB 11848 / C-107).